A 283-amino-acid chain; its full sequence is 4-diphosphocytidyl-2-C-methyl-D-erythritol kinase (283 aa).

The active site involves lysine 10. Proline 99 to serine 109 provides a ligand contact to ATP. Aspartate 141 is a catalytic residue.

This sequence belongs to the GHMP kinase family. IspE subfamily. As to quaternary structure, homodimer.

It carries out the reaction 4-CDP-2-C-methyl-D-erythritol + ATP = 4-CDP-2-C-methyl-D-erythritol 2-phosphate + ADP + H(+). Its pathway is isoprenoid biosynthesis; isopentenyl diphosphate biosynthesis via DXP pathway; isopentenyl diphosphate from 1-deoxy-D-xylulose 5-phosphate: step 3/6. Functionally, catalyzes the phosphorylation of the position 2 hydroxy group of 4-diphosphocytidyl-2C-methyl-D-erythritol. The chain is 4-diphosphocytidyl-2-C-methyl-D-erythritol kinase from Escherichia coli O81 (strain ED1a).